We begin with the raw amino-acid sequence, 424 residues long: Inositol phosphosphingolipids phospholipase C (424 aa).

Glutamate 49 lines the Mg(2+) pocket. Catalysis depends on histidine 289, which acts as the Proton acceptor. 2 helical membrane passes run 335-357 (LRIA…IAWC) and 364-386 (VIIL…CIGL).

Belongs to the neutral sphingomyelinase family. Mg(2+) is required as a cofactor.

Its subcellular location is the cell membrane. It localises to the endoplasmic reticulum membrane. The protein operates within lipid metabolism; sphingolipid metabolism. Functionally, inositol phosphosphingolipids phospholipase essential for the coordination of cell wall formation. Responsible for the hydrolysis of the phosphosphingolipids (IPS), inositol phosphorylceramide (IPC), mannosylinositol phosphorylceramide (MIPC), and mannosyldiinositol phosphorylceramide (M(IP)2C). The sequence is that of Inositol phosphosphingolipids phospholipase C (css1) from Schizosaccharomyces pombe (strain 972 / ATCC 24843) (Fission yeast).